Reading from the N-terminus, the 33-residue chain is pyr operon leader peptide (33 aa).

This chain is pyr operon leader peptide (pyrL), found in Salmonella typhi.